A 142-amino-acid polypeptide reads, in one-letter code: Large ribosomal subunit protein uL11 (142 aa).

Belongs to the universal ribosomal protein uL11 family. In terms of assembly, part of the ribosomal stalk of the 50S ribosomal subunit. Interacts with L10 and the large rRNA to form the base of the stalk. L10 forms an elongated spine to which L12 dimers bind in a sequential fashion forming a multimeric L10(L12)X complex. In terms of processing, one or more lysine residues are methylated.

Its function is as follows. Forms part of the ribosomal stalk which helps the ribosome interact with GTP-bound translation factors. This chain is Large ribosomal subunit protein uL11, found in Mycobacterium sp. (strain JLS).